A 342-amino-acid chain; its full sequence is Cytosolic Fe-S cluster assembly factor NBP35 (342 aa).

Residues 16 to 42 (SKAAPKLVAPEPEHCPGPESEQAGKGD) form a disordered region. Positions 30, 44, 47, and 53 each coordinate [4Fe-4S] cluster. Residue 83-90 (GKGGVGKS) coordinates ATP. [4Fe-4S] cluster is bound by residues C256 and C259.

Belongs to the Mrp/NBP35 ATP-binding proteins family. NUBP1/NBP35 subfamily. In terms of assembly, heterotetramer of 2 NBP35 and 2 CFD1 chains. It depends on [4Fe-4S] cluster as a cofactor.

The protein localises to the cytoplasm. Its function is as follows. Component of the cytosolic iron-sulfur (Fe/S) protein assembly (CIA) machinery. Required for maturation of extramitochondrial Fe-S proteins. The NBP35-CFD1 heterotetramer forms a Fe-S scaffold complex, mediating the de novo assembly of an Fe-S cluster and its transfer to target apoproteins. This chain is Cytosolic Fe-S cluster assembly factor NBP35, found in Coccidioides immitis (strain RS) (Valley fever fungus).